The chain runs to 709 residues: Polyribonucleotide nucleotidyltransferase (709 aa).

The Mg(2+) site is built by aspartate 489 and aspartate 495. A KH domain is found at 556–615 (PKIDMIKIDVDKIKVVIGKGGETIDKIIAETGVKIDIDEEGNVSIFSSDQAAIDRTKDII). Residues 625–693 (GEVYHAKVVR…DKGRVDASMK (69 aa)) form the S1 motif domain.

The protein belongs to the polyribonucleotide nucleotidyltransferase family. The cofactor is Mg(2+).

The protein resides in the cytoplasm. It catalyses the reaction RNA(n+1) + phosphate = RNA(n) + a ribonucleoside 5'-diphosphate. Its function is as follows. Involved in mRNA degradation. Catalyzes the phosphorolysis of single-stranded polyribonucleotides processively in the 3'- to 5'-direction. The sequence is that of Polyribonucleotide nucleotidyltransferase from Streptococcus agalactiae serotype III (strain NEM316).